Here is a 164-residue protein sequence, read N- to C-terminus: MNEKFSGKVWVLGDDIDTDIIIPTEYLALKTVEDMKPYAFSPLRPELAGQIKPGDIIVAGKNFGCGSSREQAPEVIKALGIKCVIAKSYARIFFRNSINNGLLLIENADLHDEVTEGDTIDVEVNAKITHNGKAYPIASLPDNLVDILNAGGLVKAMRKLNGLD.

This sequence belongs to the LeuD family. LeuD type 2 subfamily. In terms of assembly, heterodimer of LeuC and LeuD.

It carries out the reaction (2R,3S)-3-isopropylmalate = (2S)-2-isopropylmalate. It functions in the pathway amino-acid biosynthesis; L-leucine biosynthesis; L-leucine from 3-methyl-2-oxobutanoate: step 2/4. Catalyzes the isomerization between 2-isopropylmalate and 3-isopropylmalate, via the formation of 2-isopropylmaleate. This Lachnospira eligens (strain ATCC 27750 / DSM 3376 / VPI C15-48 / C15-B4) (Eubacterium eligens) protein is 3-isopropylmalate dehydratase small subunit.